Consider the following 432-residue polypeptide: Protein prenyltransferase alpha subunit repeat-containing protein 1-A (432 aa).

PFTA repeat units lie at residues 86–119 (ELID…TLNP), 121–154 (KDLQ…VQEL), 179–212 (EEMH…GNLK), 218–251 (DELS…LSKT), 294–327 (EEMD…HQLL), and 395–432 (SFDS…LQGH).

Belongs to the protein prenyltransferase subunit alpha family.

The protein is Protein prenyltransferase alpha subunit repeat-containing protein 1-A (ptar1-a) of Xenopus laevis (African clawed frog).